A 1690-amino-acid polypeptide reads, in one-letter code: MWSLHIVLMRCSFRLTKSLATGPWSLILILFSVQYVYGSGKKYIGPCGGRDCSVCHCVPEKGSRGPPGPPGPQGPIGPLGAPGPIGLSGEKGMRGDRGPPGAAGDKGDKGPTGVPGFPGLDGIPGHPGPPGPRGKPGMSGHNGSRGDPGFPGGRGALGPGGPLGHPGEKGEKGNSVFILGAVKGIQGDRGDPGLPGLPGSWGAGGPAGPTGYPGEPGLVGPPGQPGRPGLKGNPGVGVKGQMGDPGEVGQQGSPGPTLLVEPPDFCLYKGEKGIKGIPGMVGLPGPPGRKGESGIGAKGEKGIPGFPGPRGDPGSYGSPGFPGLKGELGLVGDPGLFGLIGPKGDPGNRGHPGPPGVLVTPPLPLKGPPGDPGFPGRYGETGDVGPPGPPGLLGRPGEACAGMIGPPGPQGFPGLPGLPGEAGIPGRPDSAPGKPGKPGSPGLPGAPGLQGLPGSSVIYCSVGNPGPQGIKGKVGPPGGRGPKGEKGNEGLCACEPGPMGPPGPPGLPGRQGSKGDLGLPGWLGTKGDPGPPGAEGPPGLPGKHGASGPPGNKGAKGDMVVSRVKGHKGERGPDGPPGFPGQPGSHGRDGHAGEKGDPGPPGDHEDATPGGKGFPGPLGPPGKAGPVGPPGLGFPGPPGERGHPGVPGHPGVRGPDGLKGQKGDTISCNVTYPGRHGPPGFDGPPGPKGFPGPQGAPGLSGSDGHKGRPGTPGTAEIPGPPGFRGDMGDPGFGGEKGSSPVGPPGPPGSPGVNGQKGIPGDPAFGHLGPPGKRGLSGVPGIKGPRGDPGCPGAEGPAGIPGFLGLKGPKGREGHAGFPGVPGPPGHSCERGAPGIPGQPGLPGYPGSPGAPGGKGQPGDVGPPGPAGMKGLPGLPGRPGAHGPPGLPGIPGPFGDDGLPGPPGPKGPRGLPGFPGFPGERGKPGAEGCPGAKGEPGEKGMSGLPGDRGLRGAKGAIGPPGDEGEMAIISQKGTPGEPGPPGDDGFPGERGDKGTPGMQGRRGEPGRYGPPGFHRGEPGEKGQPGPPGPPGPPGSTGLRGFIGFPGLPGDQGEPGSPGPPGFSGIDGARGPKGNKGDPASHFGPPGPKGEPGSPGCPGHFGASGEQGLPGIQGPRGSPGRPGPPGSSGPPGCPGDHGMPGLRGQPGEMGDPGPRGLQGDPGIPGPPGIKGPSGSPGLNGLHGLKGQKGTKGASGLHDVGPPGPVGIPGLKGERGDPGSPGISPPGPRGKKGPPGPPGSSGPPGPAGATGRAPKDIPDPGPPGDQGPPGPDGPRGAPGPPGLPGSVDLLRGEPGDCGLPGPPGPPGPPGPPGYKGFPGCDGKDGQKGPVGFPGPQGPHGFPGPPGEKGLPGPPGRKGPTGLPGPRGEPGPPADVDDCPRIPGLPGAPGMRGPEGAMGLPGMRGPSGPGCKGEPGLDGRRGVDGVPGSPGPPGRKGDTGEDGYPGGPGPPGPIGDPGPKGFGPGYLGGFLLVLHSQTDQEPTCPLGMPRLWTGYSLLYLEGQEKAHNQDLGLAGSCLPVFSTLPFAYCNIHQVCHYAQRNDRSYWLASAAPLPMMPLSEEAIRPYVSRCAVCEAPAQAVAVHSQDQSIPPCPQTWRSLWIGYSFLMHTGAGDQGGGQALMSPGSCLEDFRAAPFLECQGRQGTCHFFANKYSFWLTTVKADLQFSSAPAPDTLKESQAQRQKISRCQVCVKYS.

Positions 1 to 38 (MWSLHIVLMRCSFRLTKSLATGPWSLILILFSVQYVYG) are cleaved as a signal peptide. Residues 39–64 (SGKKYIGPCGGRDCSVCHCVPEKGSR) form a 7S domain region. 2 disordered regions span residues 61–173 (KGSR…GEKG) and 187–258 (GDRG…GPTL). A triple-helical region region spans residues 65–1459 (GPPGPPGPQG…IGDPGPKGFG (1395 aa)). Positions 66-75 (PPGPPGPQGP) are enriched in pro residues. The span at 76–88 (IGPLGAPGPIGLS) shows a compositional bias: low complexity. Positions 94–96 (RGD) match the Cell attachment site motif. N-linked (GlcNAc...) asparagine glycosylation is present at asparagine 142. The Cell attachment site signature appears at 145 to 147 (RGD). The span at 149–164 (GFPGGRGALGPGGPLG) shows a compositional bias: gly residues. The Cell attachment site motif lies at 189–191 (RGD). Residues 199–208 (GSWGAGGPAG) show a composition bias toward gly residues. The Cell attachment site motif lies at 310-312 (RGD). Disordered regions lie at residues 369–390 (PGDP…PGPP), 405–451 (GPPG…GLQG), and 469–1457 (GIKG…GPKG). Positions 412–434 (FPGLPGLPGEAGIPGRPDSAPGK) are enriched in low complexity. Composition is skewed to pro residues over residues 498 to 507 (PMGPPGPPGL) and 529 to 540 (PGPPGAEGPPGL). A compositionally biased stretch (basic and acidic residues) spans 586-607 (HGRDGHAGEKGDPGPPGDHEDA). The span at 644 to 655 (PGVPGHPGVRGP) shows a compositional bias: low complexity. Asparagine 669 carries N-linked (GlcNAc...) asparagine glycosylation. The segment covering 681–690 (FDGPPGPKGF) has biased composition (pro residues). Short sequence motifs (cell attachment site) lie at residues 724 to 726 (RGD) and 785 to 787 (RGD). Gly residues predominate over residues 849–858 (GAPGGKGQPG). Composition is skewed to low complexity over residues 866-880 (AGMK…RPGA) and 907-917 (PRGLPGFPGFP). The Cell attachment site signature appears at 989 to 991 (RGD). Residues 1023-1032 (PGPPGPPGPP) are compositionally biased toward pro residues. Over residues 1108 to 1117 (PGIQGPRGSP) the composition is skewed to low complexity. A compositionally biased stretch (pro residues) spans 1119–1131 (RPGPPGSSGPPGC). Residues 1212–1214 (RGD) carry the Cell attachment site motif. Pro residues-rich tracts occupy residues 1220–1243 (ISPP…PPGP), 1256–1280 (DPGP…PPGL), 1297–1309 (PGPP…PGPP), 1338–1353 (FPGP…PPGR), and 1443–1452 (GPGPPGPIGD). The region spanning 1465–1690 (GFLLVLHSQT…SRCQVCVKYS (226 aa)) is the Collagen IV NC1 domain. 6 disulfide bridges follow: cysteine 1480-cysteine 1569, cysteine 1513-cysteine 1566, cysteine 1525-cysteine 1531, cysteine 1588-cysteine 1686, cysteine 1622-cysteine 1683, and cysteine 1634-cysteine 1641.

It belongs to the type IV collagen family. There are six type IV collagen isoforms, alpha 1(IV)-alpha 6(IV), each of which can form a triple helix structure with 2 other chains to generate type IV collagen network. The alpha 3(IV) chain forms a triple helical protomer with alpha 4(IV) and alpha 5(IV); this triple helical structure dimerizes through NC1-NC1 domain interactions such that the alpha 3(IV), alpha 4(IV) and alpha 5(IV) chains of one protomer connect with the alpha 5(IV), alpha 4(IV) and alpha 3(IV) chains of the opposite protomer, respectively. Associates with LAMB2 at the neuromuscular junction and in GBM. Prolines at the third position of the tripeptide repeating unit (G-X-Y) are hydroxylated in some or all of the chains. In terms of processing, type IV collagens contain numerous cysteine residues which are involved in inter- and intramolecular disulfide bonding. 12 of these, located in the NC1 domain, are conserved in all known type IV collagens. Post-translationally, the trimeric structure of the NC1 domains is stabilized by covalent bonds between Lys and Met residues. In terms of tissue distribution, expressed in Bruch's membrane, outer plexiform layer, inner nuclear layer, inner plexiform layer, ganglion cell layer, inner limiting membrane and around the blood vessels of the retina (at protein level). Alpha 3 and alpha 4 type IV collagens are colocalized and present in kidney, eye, basement membranes of lens capsule, cochlea, lung, skeletal muscle, aorta, synaptic fibers, fetal kidney and fetal lung. PubMed:8083201 reports similar levels of expression of alpha 3 and alpha 4 type IV collagens in kidney, but PubMed:7523402 reports that in kidney levels of alpha 3 type IV collagen are significantly lower than those of alpha 4 type IV collagen. Highest levels of expression of alpha 4 type IV collagen are detected in kidney, calvaria, neuroretina and cardiac muscle. Lower levels of expression are observed in brain, lung and thymus, and no expression is detected in choroid plexus, liver, adrenal, pancreas, ileum or skin.

It is found in the secreted. The protein localises to the extracellular space. Its subcellular location is the extracellular matrix. It localises to the basement membrane. Functionally, type IV collagen is the major structural component of glomerular basement membranes (GBM), forming a 'chicken-wire' meshwork together with laminins, proteoglycans and entactin/nidogen. In Homo sapiens (Human), this protein is Collagen alpha-4(IV) chain (COL4A4).